Here is a 453-residue protein sequence, read N- to C-terminus: MRDSLGPFRTFTLLTVGLLLSLCVIKTVKHRRRYHRLPTPPHSMLLGNLGVVLAEILASPEGFFHLFCVENIRRKYNMPSVFYLDLWPILPSIMVVAEPAVAKHMTQVQPLQRERFSPNLFSPLLTAEFILAMEQKNWKKENPALNAALTSTRVNEATSLLAPSLHSLRSRLHSISQSGKQYPIKDLLISYIIEVGGVIQLGGSFDLLAETSALDPIIKRSLDMMGWNPVKRYIYSKEIKQRTDCLNKVLVETIQNTAQTGESGKMSQSPIYLAHYCYLFLHKHPDCLREMREEHDRVFSPDRTQTWELLQKEPHRINSLHFTLAVVKETLRLIGVGGAFICHLAMGRRADLFPDPDAFRPHRFLPGANPSIPADSFRPFEKGHLSCPGQNLALKSLVLLLLTTSREFDLVPVFPKGAPQAAEYLGGKGYPEFHIGPHVNKGMPVMVHTRVDA.

The next 2 helical transmembrane spans lie at 5–25 and 49–69; these read LGPFRTFTLLTVGLLLSLCVI and LGVVLAEILASPEGFFHLFCV. Cys-387 is a binding site for heme.

It belongs to the cytochrome P450 family. Requires heme as cofactor.

It is found in the membrane. It functions in the pathway secondary metabolite biosynthesis. Functionally, cytochrome P450 monooxygenase; part of the gene cluster that mediates the biosynthesis of the indole diterpenes penitrems. The geranylgeranyl diphosphate (GGPP) synthase penG catalyzes the first step in penitrem biosynthesis via conversion of farnesyl pyrophosphate and isopentyl pyrophosphate into geranylgeranyl pyrophosphate (GGPP). Condensation of indole-3-glycerol phosphate with GGPP by the prenyl transferase penC then forms 3-geranylgeranylindole (3-GGI). Epoxidation by the FAD-dependent monooxygenase penM leads to a epoxidized-GGI that is substrate of the terpene cyclase penB for cyclization to yield paspaline. Paspaline is subsequently converted to 13-desoxypaxilline by the cytochrome P450 monooxygenase penP, the latter being then converted to paxilline by the cytochrome P450 monooxygenase penQ. Paxilline is converted to beta-paxitriol via C-10 ketoreduction by the short-chain dehydrogenase PC-15 which can be monoprenylated at the C-20 by the indole diterpene prenyltransferase penD. A two-step elimination (acetylation and elimination) process performed by the O-acetyltransferase PC-16 and the P.simplicissimum ptmI-ortholog not yet identified in P.crustosum, leads to the production of the prenylated form of penijanthine. The FAD-linked oxidoreductase ptmO then converts the prenylated form of penijanthine into PC-M5 which is in turn transformed into PC-M4 by the aromatic dimethylallyltransferase PC-22. A series of oxidation steps involving 4 cytochrome P450 monooxygenases (PC-21, PC-05, PC-23, PC-20) and a FAD-dependent monooxygenase (PC-14) are required for the transformation of PC-M4 to penitrems A and E. Synthesis of these final products is proposed to proceed via penitrems D and C (PC-21, PC-05, PC-14) and penitrems B and F (PC-21, PC-05, PC-14, PC-23). In Penicillium crustosum (Blue mold fungus), this protein is Cytochrome P450 monooxygenase PC-20.